Reading from the N-terminus, the 368-residue chain is Cytochrome b (368 aa).

4 consecutive transmembrane segments (helical) span residues 25–45 (FGSM…FLAM), 69–90 (WIMQ…YIHI), 105–125 (WLSG…GYVL), and 170–190 (FFAL…IHII). Heme b is bound by residues H75 and H89. Heme b contacts are provided by H174 and H188. H193 contacts a ubiquinone. 4 helical membrane passes run 218–238 (YKDM…MSFT), 280–300 (LGGT…PFTH), 312–332 (LTQT…WTAT), and 339–358 (FIFI…IINP).

Belongs to the cytochrome b family. The cytochrome bc1 complex contains 3 respiratory subunits (MT-CYB, CYC1 and UQCRFS1), 2 core proteins (UQCRC1 and UQCRC2) and probably 6 low-molecular weight proteins. Requires heme b as cofactor.

It localises to the mitochondrion inner membrane. Component of the ubiquinol-cytochrome c reductase complex (complex III or cytochrome b-c1 complex) that is part of the mitochondrial respiratory chain. The b-c1 complex mediates electron transfer from ubiquinol to cytochrome c. Contributes to the generation of a proton gradient across the mitochondrial membrane that is then used for ATP synthesis. The polypeptide is Cytochrome b (MT-CYB) (Notechis ater (Black tiger snake)).